Consider the following 417-residue polypeptide: MDKQQSRVLNLLFQGSLVKQILAGLIAGILLAWLAPEVAKMMSLLGNLFISALKAVAPVLVWVLVMASIANHRQGQKTSIRPILVLYLLATFFAALTAVVASFVFPSVLTLVVNDSQLSPPENIAEVLKGVLINVVANPVDALINGNYMGILAWAIGLGLALRHASDTTKALTQDFADAVTNLVRVVIRLAPIGIFGLVSSTIATTGFKALAGYLHVLLVLIGCMLFVALVVNPLIVFWKIRRNPYPLVWACLRESGVTAFFTRSSAANIPVNMAMCRRMNLNEDTYSVSIPLGATINMGGAAITITILTLAAVNTLGMPVDIPTALLLSLVAAICACGASGVAGGSLLLIPLACSMFGISNDLAMQVVAVGVMIGVLQDSAETALNSSTDVLFTATVCIAEDERLVANPLTEKNNG.

Transmembrane regions (helical) follow at residues 21–41 (ILAGLIAGILLAWLAPEVAKM), 49–69 (FISALKAVAPVLVWVLVMASI), 83–103 (ILVLYLLATFFAALTAVVASF), 142–162 (ALINGNYMGILAWAIGLGLAL), 193–213 (IGIFGLVSSTIATTGFKALAG), 218–238 (LLVLIGCMLFVALVVNPLIVF), 291–311 (IPLGATINMGGAAITITILTL), and 331–351 (LVAAICACGASGVAGGSLLLI).

The protein belongs to the dicarboxylate/amino acid:cation symporter (DAACS) (TC 2.A.23) family.

The protein resides in the cell inner membrane. It carries out the reaction L-serine(in) + Na(+)(in) = L-serine(out) + Na(+)(out). The enzyme catalyses L-threonine(in) + Na(+)(in) = L-threonine(out) + Na(+)(out). Functionally, involved in the import of serine and threonine into the cell, with the concomitant import of sodium (symport system). This chain is Serine/threonine transporter SstT, found in Proteus mirabilis (strain HI4320).